The following is a 425-amino-acid chain: tRNA(Met) cytidine acetate ligase (425 aa).

ATP-binding positions include 7–20 (IVEYNPFHNGHLYH), Gly-102, Asn-165, and 190–191 (RI).

Belongs to the TmcAL family.

The protein resides in the cytoplasm. It catalyses the reaction cytidine(34) in elongator tRNA(Met) + acetate + ATP = N(4)-acetylcytidine(34) in elongator tRNA(Met) + AMP + diphosphate. Functionally, catalyzes the formation of N(4)-acetylcytidine (ac(4)C) at the wobble position of elongator tRNA(Met), using acetate and ATP as substrates. First activates an acetate ion to form acetyladenylate (Ac-AMP) and then transfers the acetyl group to tRNA to form ac(4)C34. The chain is tRNA(Met) cytidine acetate ligase from Thermosipho melanesiensis (strain DSM 12029 / CIP 104789 / BI429).